The sequence spans 748 residues: Histone-lysine N-methyltransferase EZH2 (748 aa).

Over residues 184–199 the composition is skewed to acidic residues; it reads YEDDEDGDDNQDDEQD. Disordered stretches follow at residues 184–220 and 342–428; these read YEDDEDGDDNQDDEQDDTAKDQDDNMEDKETQPLRKF and AERI…NIEP. The span at 200–220 shows a compositional bias: basic and acidic residues; that stretch reads DTAKDQDDNMEDKETQPLRKF. Basic residues predominate over residues 347 to 359; the sequence is TPPKRPSGRRRGR. Residues 362–374 are compositionally biased toward polar residues; that stretch reads NNTSRPSTPTVNV. A compositionally biased stretch (basic and acidic residues) spans 376-387; sequence EAKDTDSDREAG. Residues 505-607 form the CXC domain; that stretch reads CRKIQLKKDG…SKNVSCKNCS (103 aa). Positions 614-729 constitute an SET domain; sequence KHLLLAPSDV…TGEELFFDYR (116 aa).

It belongs to the class V-like SAM-binding methyltransferase superfamily. Histone-lysine methyltransferase family. EZ subfamily. Component of the prc2/eed-ezh2 complex.

It localises to the nucleus. It carries out the reaction L-lysyl(27)-[histone H3] + 3 S-adenosyl-L-methionine = N(6),N(6),N(6)-trimethyl-L-lysyl(27)-[histone H3] + 3 S-adenosyl-L-homocysteine + 3 H(+). In terms of biological role, polycomb group (PcG) protein. Catalytic subunit of the prc2/eed-ezh2 complex, which methylates 'Lys-9' and 'Lys-27' of histone H3, leading to transcriptional repression of the affected target gene. May repress transcription of the egr2 and en2 genes. May regulate the circadian clock via histone methylation at the promoter of the circadian genes. The chain is Histone-lysine N-methyltransferase EZH2 (ezh2-a) from Xenopus laevis (African clawed frog).